The sequence spans 499 residues: MLQETISLTPLGQPLIAGFVVVSAVLYLLYNTQQWRPNNLPLLNDGGPFDFLQVTAVNRFRRDARRLIKSGFDSYKNVFAMRTDVGVELFASPEYADQFRNHPSLKVFPFTAKMHHGHLPGFELCRSQPVEDRILIESVRTQLAQSLGKLIQPLASDIGEAISDRWPSESGWQEIVLGSVVERTIAQGTSSVYCLDEAWPEFVVKMEMALGMASAALSAWPVMLRRIVAKFLPECLELYRIMKSGRELMSRDMRRRTALQASTGEEPLNFFEWFKEASHGEEYDELILNLRIAFASMHGLCDHLVKILLRLSEDPQLVSDLRKEVIQVYETHGWSKTALYHLKLMDSAFKEVQRVDPILFVGRVAVADVTLKDGLIIQKGQSIRISGHTMWDEDKYPDAAHFDPYRFYRLRQAPGQENTAQFTSPTSDHLGFGYGGRACPGRFFAAAVLKISLCHVLMKYDIKPANGETGQHVWEFAAAINANMTAKVLVRRRQPEIQI.

Residues 10–30 (PLGQPLIAGFVVVSAVLYLLY) traverse the membrane as a helical segment. Cysteine 439 contacts heme. A glycan (N-linked (GlcNAc...) asparagine) is linked at asparagine 483.

It belongs to the cytochrome P450 family. Heme is required as a cofactor.

The protein localises to the membrane. It participates in secondary metabolite biosynthesis; terpenoid biosynthesis. Cytochrome P450 monooxygenase; part of the gene cluster B that mediates the biosynthesis of austinol and dehydroaustinol, two fungal meroterpenoids. The first step of the pathway is the synthesis of 3,5-dimethylorsellinic acid by the polyketide synthase ausA. 3,5-dimethylorsellinic acid is then prenylated by the polyprenyl transferase ausN. Further epoxidation by the FAD-dependent monooxygenase ausM and cyclization by the probable terpene cyclase ausL lead to the formation of protoaustinoid A. Protoaustinoid A is then oxidized to spiro-lactone preaustinoid A3 by the combined action of the FAD-binding monooxygenases ausB and ausC, and the dioxygenase ausE. Acid-catalyzed keto-rearrangement and ring contraction of the tetraketide portion of preaustinoid A3 by ausJ lead to the formation of preaustinoid A4. The aldo-keto reductase ausK, with the help of ausH, is involved in the next step by transforming preaustinoid A4 into isoaustinone which is in turn hydroxylated by the P450 monooxygenase ausI to form austinolide. Finally, the cytochrome P450 monooxygenase ausG modifies austinolide to austinol. Austinol can be further modified to dehydroaustinol which forms a diffusible complex with diorcinol that initiates conidiation. Due to genetic rearrangements of the clusters and the subsequent loss of some enzymes, the end products of the Emericella nidulans austinoid biosynthesis clusters are austinol and dehydroaustinol, even if additional enzymes, such as the O-acetyltransferase ausQ and the cytochrome P450 monooxygenase ausR are still functional. The protein is Cytochrome P450 monooxygenase ausI of Emericella nidulans (strain FGSC A4 / ATCC 38163 / CBS 112.46 / NRRL 194 / M139) (Aspergillus nidulans).